A 521-amino-acid polypeptide reads, in one-letter code: GMP synthase [glutamine-hydrolyzing] (521 aa).

Residues 9–203 (KILILDFGSQ…VSDICQCKKN (195 aa)) enclose the Glutamine amidotransferase type-1 domain. C86 functions as the Nucleophile in the catalytic mechanism. Catalysis depends on residues H177 and E179. Residues 204-396 (WTTDNIITKL…LGLPTHMLNC (193 aa)) enclose the GMPS ATP-PPase domain. Residue 231–237 (SGGVDSS) participates in ATP binding.

In terms of assembly, homodimer.

It catalyses the reaction XMP + L-glutamine + ATP + H2O = GMP + L-glutamate + AMP + diphosphate + 2 H(+). Its pathway is purine metabolism; GMP biosynthesis; GMP from XMP (L-Gln route): step 1/1. Catalyzes the synthesis of GMP from XMP. This is GMP synthase [glutamine-hydrolyzing] from Vesicomyosocius okutanii subsp. Calyptogena okutanii (strain HA).